We begin with the raw amino-acid sequence, 427 residues long: U1 small nuclear ribonucleoprotein 70 kDa (427 aa).

Disordered stretches follow at residues 82–102 (EPGDPEYAPPKPEVELPSQKR) and 215–427 (RGRT…EYVR). Residues 93-102 (PEVELPSQKR) are compositionally biased toward basic and acidic residues. In terms of domain architecture, RRM spans 138–216 (KTLFVSRLNY…RRVLVDVERG (79 aa)). Over residues 227 to 241 (LGGGLGTSRVGGGEE) the composition is skewed to gly residues. 2 stretches are compositionally biased toward basic and acidic residues: residues 257-402 (EPSR…RYDK) and 409-427 (RYEREYKRSKRSESREYVR). Ser282 carries the phosphoserine modification.

Component of the spliceosome. Interacts with CYP63, U2AF35A, U2AF35B, SRZ21, RSZ22, SR34, SR45, SR45A and SCL33. Phosphorylated. The association and dissociation with SR45 is not affected by the phosphorylation status. As to expression, ubiquitous.

Its subcellular location is the nucleus speckle. It localises to the nucleus. The protein resides in the nucleoplasm. Functionally, mediates the splicing of pre-mRNA by binding to the loop I region of U1-snRNA. The polypeptide is U1 small nuclear ribonucleoprotein 70 kDa (RNU1) (Arabidopsis thaliana (Mouse-ear cress)).